Here is a 406-residue protein sequence, read N- to C-terminus: Lysophospholipid transporter LplT (406 aa).

The next 11 membrane-spanning stretches (helical) occupy residues 16–36, 53–73, 91–111, 139–159, 164–184, 227–247, 253–273, 285–305, 310–330, 349–369, and 372–392; these read MVAV…LLFA, ILQM…GQIA, AGAL…LVGV, MMEA…GILA, MAAL…NLFI, LFWG…PVAL, ATPT…AGAA, CLPA…QNSM, LLLI…NALL, LGEN…VKLG, and VVAV…LLWG.

This sequence belongs to the major facilitator superfamily. LplT (TC 2.A.1.42) family.

It localises to the cell inner membrane. Its function is as follows. Catalyzes the facilitated diffusion of 2-acyl-glycero-3-phosphoethanolamine (2-acyl-GPE) into the cell. This Yersinia pestis bv. Antiqua (strain Antiqua) protein is Lysophospholipid transporter LplT.